Consider the following 631-residue polypeptide: Phosphomethylpyrimidine synthase (631 aa).

Substrate-binding positions include Asn239, Met268, Tyr297, His333, 353-355, 394-397, and Glu433; these read SRG and DGLR. Residue His437 participates in Zn(2+) binding. Position 460 (Tyr460) interacts with substrate. Zn(2+) is bound at residue His501. Positions 581, 584, and 589 each coordinate [4Fe-4S] cluster.

The protein belongs to the ThiC family. Homodimer. [4Fe-4S] cluster serves as cofactor.

It catalyses the reaction 5-amino-1-(5-phospho-beta-D-ribosyl)imidazole + S-adenosyl-L-methionine = 4-amino-2-methyl-5-(phosphooxymethyl)pyrimidine + CO + 5'-deoxyadenosine + formate + L-methionine + 3 H(+). It functions in the pathway cofactor biosynthesis; thiamine diphosphate biosynthesis. Functionally, catalyzes the synthesis of the hydroxymethylpyrimidine phosphate (HMP-P) moiety of thiamine from aminoimidazole ribotide (AIR) in a radical S-adenosyl-L-methionine (SAM)-dependent reaction. The protein is Phosphomethylpyrimidine synthase of Salmonella dublin (strain CT_02021853).